We begin with the raw amino-acid sequence, 286 residues long: Probable aquaporin-3 (286 aa).

Positions 1–34 are disordered; sequence MADTYGMNGHNGHVKDRRSSSMNGRNRLYAQQEP. Residues 1–52 lie on the Cytoplasmic side of the membrane; the sequence is MADTYGMNGHNGHVKDRRSSSMNGRNRLYAQQEPQRTTHLSEFGKHMVAASG. Residues 53–73 traverse the membrane as a helical segment; sequence EFVGTFLFLYFGYAGNIVAVL. The Extracellular segment spans residues 74 to 87; the sequence is QEPISGPNGTLANN. N-linked (GlcNAc...) asparagine glycosylation is found at Asn81 and Asn86. Residues 88–108 form a helical membrane-spanning segment; sequence TVMYIAMAYGFSLLVNVWTFY. Topologically, residues 109 to 135 are cytoplasmic; the sequence is RISGGLFNPAVTFGLCLSGQLPWIRAL. Residues 116-118 carry the NPA 1 motif; that stretch reads NPA. A helical transmembrane segment spans residues 136 to 156; it reads FLFPSQIIAAMCAGGLVNAMF. Residues 157–175 are Extracellular-facing; sequence PGSASIANTTLGPNTSIAQ. Residues Asn164 and Asn170 are each glycosylated (N-linked (GlcNAc...) asparagine). A helical membrane pass occupies residues 176-196; the sequence is GVFLEMFFTAQLVFVVLMLAA. The Cytoplasmic portion of the chain corresponds to 197 to 202; the sequence is EKSRDT. Residues 203–223 traverse the membrane as a helical segment; that stretch reads FLAPVGIGLALFVALIPGVFV. The Extracellular portion of the chain corresponds to 224–244; the sequence is TGGSANPVRSFGCAVGSRDFP. The NPA 2 motif lies at 229 to 231; it reads NPV. The chain crosses the membrane as a helical span at residues 245 to 265; it reads GYHWIYWVGPLLGAALAAGYF. Residues 266–286 lie on the Cytoplasmic side of the membrane; that stretch reads RLVKMMHYEEANPGQDSPVDV.

It belongs to the MIP/aquaporin (TC 1.A.8) family.

It is found in the membrane. The enzyme catalyses H2O(in) = H2O(out). Its function is as follows. Probable water channel that may have redundant functions with FgAQP5. The chain is Probable aquaporin-3 from Gibberella zeae (strain ATCC MYA-4620 / CBS 123657 / FGSC 9075 / NRRL 31084 / PH-1) (Wheat head blight fungus).